The sequence spans 494 residues: Cytochrome P450 2C23 (494 aa).

Position 131 is a phosphoserine (S131). N6-acetyllysine occurs at positions 253 and 379. C439 is a heme binding site.

Belongs to the cytochrome P450 family. Heme is required as a cofactor. As to expression, expressed in kidney and liver. Expressed in cortical tubules of kidney (at protein level).

The protein localises to the endoplasmic reticulum membrane. It localises to the microsome membrane. It carries out the reaction (5Z,8Z,11Z,14Z)-eicosatetraenoate + reduced [NADPH--hemoprotein reductase] + O2 = (8R,9S)-epoxy-(5Z,11Z,14Z)-eicosatrienoate + oxidized [NADPH--hemoprotein reductase] + H2O + H(+). It catalyses the reaction (5Z,8Z,11Z,14Z)-eicosatetraenoate + reduced [NADPH--hemoprotein reductase] + O2 = (11R,12S)-epoxy-(5Z,8Z,14Z)-eicosatrienoate + oxidized [NADPH--hemoprotein reductase] + H2O + H(+). The enzyme catalyses (5Z,8Z,11Z,14Z)-eicosatetraenoate + reduced [NADPH--hemoprotein reductase] + O2 = (11S,12R)-epoxy-(5Z,8Z,14Z)-eicosatrienoate + oxidized [NADPH--hemoprotein reductase] + H2O + H(+). The catalysed reaction is (5Z,8Z,11Z,14Z)-eicosatetraenoate + reduced [NADPH--hemoprotein reductase] + O2 = (14R,15S)-epoxy-(5Z,8Z,11Z)-eicosatrienoate + oxidized [NADPH--hemoprotein reductase] + H2O + H(+). It carries out the reaction (5Z,8Z,11Z,14Z)-eicosatetraenoate + reduced [NADPH--hemoprotein reductase] + O2 = (14S,15R)-epoxy-(5Z,8Z,11Z)-eicosatrienoate + oxidized [NADPH--hemoprotein reductase] + H2O + H(+). It catalyses the reaction (5Z,8Z,11Z,14Z,17Z)-eicosapentaenoate + reduced [NADPH--hemoprotein reductase] + O2 = 8,9-epoxy-(5Z,11Z,14Z,17Z)-eicosatetraenoate + oxidized [NADPH--hemoprotein reductase] + H2O + H(+). The enzyme catalyses (5Z,8Z,11Z,14Z,17Z)-eicosapentaenoate + reduced [NADPH--hemoprotein reductase] + O2 = 11,12-epoxy-(5Z,8Z,14Z,17Z)-eicosatetraenoate + oxidized [NADPH--hemoprotein reductase] + H2O + H(+). The catalysed reaction is (5Z,8Z,11Z,14Z,17Z)-eicosapentaenoate + reduced [NADPH--hemoprotein reductase] + O2 = 14,15-epoxy-(5Z,8Z,11Z,17Z)-eicosatetraenoate + oxidized [NADPH--hemoprotein reductase] + H2O + H(+). It carries out the reaction (5Z,8Z,11Z,14Z,17Z)-eicosapentaenoate + reduced [NADPH--hemoprotein reductase] + O2 = (17R,18S)-epoxy-(5Z,8Z,11Z,14Z)-eicosatetraenoate + oxidized [NADPH--hemoprotein reductase] + H2O + H(+). It catalyses the reaction (5Z,8Z,11Z,14Z,17Z)-eicosapentaenoate + reduced [NADPH--hemoprotein reductase] + O2 = (17S,18R)-epoxy-(5Z,8Z,11Z,14Z)-eicosatetraenoate + oxidized [NADPH--hemoprotein reductase] + H2O + H(+). The enzyme catalyses 20-hydroxy-(5Z,8Z,11Z,14Z)-eicosatetraenoate + reduced [NADPH--hemoprotein reductase] + O2 = 20-hydroxy-8,9-epoxy-(5Z,11Z,14Z)-eicosatrienoate + oxidized [NADPH--hemoprotein reductase] + H2O + H(+). The protein operates within lipid metabolism; arachidonate metabolism. Functionally, a cytochrome P450 monooxygenase involved in polyunsaturated fatty acids (PUFAs) metabolism and signaling. Catalyzes preferentially the epoxidation of double bonds of PUFAs. Converts arachidonic acid (ARA, C20:4(n-6)) primarily to stereospecific products 8R,9S-, 11R,12S-, and 14S,15R-EET. Plays a major role in the formation of EETs and hydroxy-EETs (HEETs) in kidney. Via EETs may inhibit the epithelial sodium channels (ENaCs) in nephron segments, preventing excessive sodium absorption during high dietary salt intake. Participates in the formation of anti-inflammatory hydroxyepoxyeicosatrienoic acids (HEETs) by converting 20-hydroxyeicosatetraenoic acid (20-HETE) to 20,8,9-HEET, an activator of PPARA. Metabolizes eicosapentaenoic acid (EPA, C20:5(n-3)) to epoxyeicosatetraenoic acid (EETeTr) regioisomers, 8,9-, 11,12-, 14,15-, and 17,18-EETeTr, preferentially producing 17R,18S enantiomer. Mechanistically, uses molecular oxygen inserting one oxygen atom into a substrate, and reducing the second into a water molecule, with two electrons provided by NADPH via cytochrome P450 reductase (NADPH--hemoprotein reductase). This Rattus norvegicus (Rat) protein is Cytochrome P450 2C23.